Here is a 427-residue protein sequence, read N- to C-terminus: Sensor histidine kinase ArsS (427 aa).

The next 2 helical transmembrane spans lie at Phe3–Phe23 and Asn131–Leu151. An HAMP domain is found at Leu151–Glu203. The Histidine kinase domain occupies Ser211 to Ile398. His214 is modified (phosphohistidine; by autocatalysis).

Post-translationally, autophosphorylated.

The protein localises to the membrane. The enzyme catalyses ATP + protein L-histidine = ADP + protein N-phospho-L-histidine.. In terms of biological role, member of the two-component regulatory system ArsS/ArsR that regulates genes involved in biofilm formation and acid adaptation by acting on major ammonia-producing pathways. Functions as a sensor protein kinase which is autophosphorylated at a histidine residue and transfers its phosphate group to the conserved aspartic acid residue in the regulatory domain of ArsR. In turn, ArsR binds to the upstream promoter regions of target genes including ureA, amiE and amiF to positively regulate their expression in response to acidic pH. Also participates in acidic acclimatation in a phosphorylation-independent pathway by regulating acid-induced trafficking of urease and its accessory proteins to the inner membrane. This is Sensor histidine kinase ArsS from Helicobacter pylori (strain ATCC 700392 / 26695) (Campylobacter pylori).